The chain runs to 202 residues: Peptide methionine sulfoxide reductase B2, chloroplastic (202 aa).

A chloroplast-targeting transit peptide spans 1–63 (MAFNIITPGR…RRGFHGGRIV (63 aa)). The 122-residue stretch at 77–198 (EEEWRAILSP…NSISLKFTPE (122 aa)) folds into the MsrB domain. Zn(2+) contacts are provided by Cys116, Cys119, Cys162, and Cys165. A disulfide bridge connects residues Cys134 and Cys187. The Nucleophile role is filled by Cys187.

It belongs to the MsrB Met sulfoxide reductase family. The cofactor is Zn(2+). In terms of tissue distribution, expressed in stems, young leaves, floral buds and flowers. Expressed at low levels in roots, mature leaves and siliques (at protein level).

Its subcellular location is the plastid. The protein localises to the chloroplast. It catalyses the reaction L-methionyl-[protein] + [thioredoxin]-disulfide + H2O = L-methionyl-(R)-S-oxide-[protein] + [thioredoxin]-dithiol. In terms of biological role, catalyzes the reduction of methionine sulfoxide (MetSO) to methionine in proteins. Specifically reduces the MetSO R-enantiomer. Plays a protective role against oxidative stress by restoring activity to proteins that have been inactivated by methionine oxidation. May play an essential function in association with MSRB1 in maintaining vegetative growth during environmental constraints, through the preservation of photosynthetic antennae. MSRB1 and MSRB2 account for most of the leaf peptide MSR capacity. This is Peptide methionine sulfoxide reductase B2, chloroplastic from Arabidopsis thaliana (Mouse-ear cress).